We begin with the raw amino-acid sequence, 293 residues long: Formamidopyrimidine-DNA glycosylase (293 aa).

Pro2 functions as the Schiff-base intermediate with DNA in the catalytic mechanism. Glu3 acts as the Proton donor in catalysis. Catalysis depends on Lys60, which acts as the Proton donor; for beta-elimination activity. DNA is bound by residues His110, Arg129, and Lys174. The FPG-type zinc-finger motif lies at 259–293 (NVYRRTGKKCHACKNLIERQKISGRSTHWCRKCQK). Arg283 acts as the Proton donor; for delta-elimination activity in catalysis.

The protein belongs to the FPG family. As to quaternary structure, monomer. It depends on Zn(2+) as a cofactor.

It carries out the reaction Hydrolysis of DNA containing ring-opened 7-methylguanine residues, releasing 2,6-diamino-4-hydroxy-5-(N-methyl)formamidopyrimidine.. It catalyses the reaction 2'-deoxyribonucleotide-(2'-deoxyribose 5'-phosphate)-2'-deoxyribonucleotide-DNA = a 3'-end 2'-deoxyribonucleotide-(2,3-dehydro-2,3-deoxyribose 5'-phosphate)-DNA + a 5'-end 5'-phospho-2'-deoxyribonucleoside-DNA + H(+). Involved in base excision repair of DNA damaged by oxidation or by mutagenic agents. Acts as a DNA glycosylase that recognizes and removes damaged bases. Has a preference for oxidized purines, such as 7,8-dihydro-8-oxoguanine (8-oxoG). Has AP (apurinic/apyrimidinic) lyase activity and introduces nicks in the DNA strand. Cleaves the DNA backbone by beta-delta elimination to generate a single-strand break at the site of the removed base with both 3'- and 5'-phosphates. This chain is Formamidopyrimidine-DNA glycosylase, found in Prochlorococcus marinus (strain MIT 9515).